The following is a 193-amino-acid chain: Transcriptional repressor NrdR (193 aa).

A zinc finger lies at 3–34 (CPYCGGLDTQVKDSRPSEDASAIRRRRICPDC). Residues 49-139 (LTVVKRSGRK…VYKNFREAKD (91 aa)) form the ATP-cone domain. Residues 150–193 (DQQDGAVPQAEADRPIGAGPPSEAAQPAAGEGGDAPMRRARSRA) are disordered.

This sequence belongs to the NrdR family. It depends on Zn(2+) as a cofactor.

Negatively regulates transcription of bacterial ribonucleotide reductase nrd genes and operons by binding to NrdR-boxes. This is Transcriptional repressor NrdR from Methylobacterium nodulans (strain LMG 21967 / CNCM I-2342 / ORS 2060).